Consider the following 342-residue polypeptide: L-threonine 3-dehydrogenase (342 aa).

C38 serves as a coordination point for Zn(2+). Active-site charge relay system residues include T40 and H43. H63 and E64 together coordinate Zn(2+). Residues I175, D195, R200, 263–265 (LGI), and 287–288 (VY) each bind NAD(+).

This sequence belongs to the zinc-containing alcohol dehydrogenase family. As to quaternary structure, homotetramer. Zn(2+) serves as cofactor.

The protein resides in the cytoplasm. It catalyses the reaction L-threonine + NAD(+) = (2S)-2-amino-3-oxobutanoate + NADH + H(+). It functions in the pathway amino-acid degradation; L-threonine degradation via oxydo-reductase pathway; glycine from L-threonine: step 1/2. Catalyzes the NAD(+)-dependent oxidation of L-threonine to 2-amino-3-ketobutyrate. The chain is L-threonine 3-dehydrogenase from Ruegeria pomeroyi (strain ATCC 700808 / DSM 15171 / DSS-3) (Silicibacter pomeroyi).